A 132-amino-acid polypeptide reads, in one-letter code: uncharacterized protein (132 aa).

The region spanning 45–115 is the BIG2 domain; sequence VHMEKHKLKI…VVIVTTAEGK (71 aa).

The protein to B.anthracis BA1245.

This is an uncharacterized protein from Bacillus cereus (strain ATCC 14579 / DSM 31 / CCUG 7414 / JCM 2152 / NBRC 15305 / NCIMB 9373 / NCTC 2599 / NRRL B-3711).